A 335-amino-acid chain; its full sequence is UPF0353 protein MAV335 (335 aa).

The next 2 helical transmembrane spans lie at 18–38 (WFFL…LMQL) and 67–87 (LPAI…AGPT). The region spanning 98-295 (VVMLVIDVSQ…QELKSVYATL (198 aa)) is the VWFA domain. The chain crosses the membrane as a helical span at residues 309–329 (SVGWVRLGALVLRLAADALLI).

It belongs to the UPF0353 family.

It localises to the cell membrane. The sequence is that of UPF0353 protein MAV335 from Mycobacterium avium.